Reading from the N-terminus, the 523-residue chain is Pentatricopeptide repeat-containing protein At1g64580 (523 aa).

PPR repeat units follow at residues 43–77 (HHHH…RPIP), 78–112 (SIVD…GISH), 113–147 (DLYS…GFRP), 148–182 (SIVT…GFVP), 183–217 (NVVI…GIRA), 218–252 (DAVT…KIDP), 253–287 (NVIF…SVVP), 288–322 (NVFT…GCFP), 323–357 (DVVT…GLVG), 358–392 (DAFT…GVSP), 393–427 (DIVT…EMDV), 428–462 (DIIT…GVKP), and 463–497 (DAIA…GFMP).

It belongs to the PPR family. P subfamily.

This Arabidopsis thaliana (Mouse-ear cress) protein is Pentatricopeptide repeat-containing protein At1g64580.